The following is a 313-amino-acid chain: Ribosomal RNA small subunit methyltransferase H (313 aa).

Residues 35–37 (GGH), Asp-55, Phe-79, Asp-100, and Gln-107 each bind S-adenosyl-L-methionine.

This sequence belongs to the methyltransferase superfamily. RsmH family.

It is found in the cytoplasm. The catalysed reaction is cytidine(1402) in 16S rRNA + S-adenosyl-L-methionine = N(4)-methylcytidine(1402) in 16S rRNA + S-adenosyl-L-homocysteine + H(+). Functionally, specifically methylates the N4 position of cytidine in position 1402 (C1402) of 16S rRNA. This Burkholderia pseudomallei (strain 1106a) protein is Ribosomal RNA small subunit methyltransferase H.